The chain runs to 101 residues: Small ribosomal subunit protein uS14m (101 aa).

The protein belongs to the universal ribosomal protein uS14 family. In terms of assembly, component of the mitochondrial ribosome small subunit (28S) which comprises a 12S rRNA and about 30 distinct proteins. Interacts with LIAT1.

The protein localises to the mitochondrion. This is Small ribosomal subunit protein uS14m (mrps14) from Dictyostelium citrinum (Slime mold).